The chain runs to 285 residues: Hydroxyethylthiazole kinase 1 (285 aa).

Met48 is a binding site for substrate. Arg124 and Ser183 together coordinate ATP. Gly210 contributes to the substrate binding site.

It belongs to the Thz kinase family. The cofactor is Mg(2+).

It catalyses the reaction 5-(2-hydroxyethyl)-4-methylthiazole + ATP = 4-methyl-5-(2-phosphooxyethyl)-thiazole + ADP + H(+). Its pathway is cofactor biosynthesis; thiamine diphosphate biosynthesis; 4-methyl-5-(2-phosphoethyl)-thiazole from 5-(2-hydroxyethyl)-4-methylthiazole: step 1/1. Its function is as follows. Catalyzes the phosphorylation of the hydroxyl group of 4-methyl-5-beta-hydroxyethylthiazole (THZ). The sequence is that of Hydroxyethylthiazole kinase 1 from Methanosphaera stadtmanae (strain ATCC 43021 / DSM 3091 / JCM 11832 / MCB-3).